The sequence spans 469 residues: Light-independent protochlorophyllide reductase subunit N (469 aa).

[4Fe-4S] cluster-binding residues include Cys24, Cys49, and Cys109.

It belongs to the BchN/ChlN family. In terms of assembly, protochlorophyllide reductase is composed of three subunits; ChlL, ChlN and ChlB. Forms a heterotetramer of two ChlB and two ChlN subunits. [4Fe-4S] cluster serves as cofactor.

It carries out the reaction chlorophyllide a + oxidized 2[4Fe-4S]-[ferredoxin] + 2 ADP + 2 phosphate = protochlorophyllide a + reduced 2[4Fe-4S]-[ferredoxin] + 2 ATP + 2 H2O. It functions in the pathway porphyrin-containing compound metabolism; chlorophyll biosynthesis (light-independent). Its function is as follows. Component of the dark-operative protochlorophyllide reductase (DPOR) that uses Mg-ATP and reduced ferredoxin to reduce ring D of protochlorophyllide (Pchlide) to form chlorophyllide a (Chlide). This reaction is light-independent. The NB-protein (ChlN-ChlB) is the catalytic component of the complex. In Synechocystis sp. (strain ATCC 27184 / PCC 6803 / Kazusa), this protein is Light-independent protochlorophyllide reductase subunit N.